The sequence spans 309 residues: Tagatose-6-phosphate kinase (309 aa).

It belongs to the carbohydrate kinase PfkB family. LacC subfamily.

The catalysed reaction is D-tagatofuranose 6-phosphate + ATP = D-tagatofuranose 1,6-bisphosphate + ADP + H(+). The protein operates within carbohydrate metabolism; D-tagatose 6-phosphate degradation; D-glyceraldehyde 3-phosphate and glycerone phosphate from D-tagatose 6-phosphate: step 1/2. This chain is Tagatose-6-phosphate kinase, found in Streptococcus pyogenes serotype M6 (strain ATCC BAA-946 / MGAS10394).